A 631-amino-acid polypeptide reads, in one-letter code: MSATKLTRREQRARAQHFIDTLEGTAFPNSKRIYITGTQPGVRVPMREIQLSPTLIGGSKEQPQYEENEAIPVYDTSGPYGDPQIAINVQQGLAKLRQPWIDARGDTEELTVRSSDYTKARLAYDGLDELRFSGVLTPKRAKAGRRVTQLHYARQGIITPEMEFIAIRENMGRERIRSEVLRHQHSGMSFGARLPENITAESVRDEVAAGRAIIPANINHPESEPMIIGRNFLVKVNANIGNSAVTSSIEEEVEKLVWSTRWGADTVMDLSTGRYIHETREWILRNSPVPIGTVPIYQALEKVNGIAEDLTWEAFRDTLLEQAEQGVDYFTIHAGVLLRYVPMTAKRLTGIVSRGGSIMAKWCLSHHQENFLYQHFREICEICAAYDVSLSLGDGLRPGSIQDANDEAQFAELHTLGELTKIAWEYDVQVMIEGPGHVPMQMIRRNMTEELEHCHEAPFYTLGPLTTDIAPGYDHFTSGIGAAMIGWFGCAMLCYVTPKEHLGLPNKEDVKQGLITYKIAAHAADLAKGHPGAQIRDNAMSKARFEFRWEDQFNLALDPFTARTYHDETLPQESGKVAHFCSMCGPKFCSMKISQEVRDYAAAQTIEVGMADMSENFRARGGEIYLRKEEA.

Residues Asn239, Met268, Tyr297, His333, 353–355, 394–397, and Glu433 contribute to the substrate site; these read SRG and DGLR. Residue His437 coordinates Zn(2+). A substrate-binding site is contributed by Tyr460. His501 lines the Zn(2+) pocket. [4Fe-4S] cluster contacts are provided by Cys581, Cys584, and Cys589.

This sequence belongs to the ThiC family. In terms of assembly, homodimer. Requires [4Fe-4S] cluster as cofactor.

It carries out the reaction 5-amino-1-(5-phospho-beta-D-ribosyl)imidazole + S-adenosyl-L-methionine = 4-amino-2-methyl-5-(phosphooxymethyl)pyrimidine + CO + 5'-deoxyadenosine + formate + L-methionine + 3 H(+). It participates in cofactor biosynthesis; thiamine diphosphate biosynthesis. Catalyzes the synthesis of the hydroxymethylpyrimidine phosphate (HMP-P) moiety of thiamine from aminoimidazole ribotide (AIR) in a radical S-adenosyl-L-methionine (SAM)-dependent reaction. In Shigella dysenteriae serotype 1 (strain Sd197), this protein is Phosphomethylpyrimidine synthase.